Consider the following 180-residue polypeptide: UPF0227 protein YcfP (180 aa).

It belongs to the UPF0227 family.

In Escherichia coli O9:H4 (strain HS), this protein is UPF0227 protein YcfP.